Here is a 1213-residue protein sequence, read N- to C-terminus: DNA-directed RNA polymerase subunit beta' (1213 aa).

4 residues coordinate Zn(2+): cysteine 60, cysteine 62, cysteine 75, and cysteine 78. The Mg(2+) site is built by aspartate 449, aspartate 451, and aspartate 453. Residues cysteine 818, cysteine 892, cysteine 899, and cysteine 902 each coordinate Zn(2+).

It belongs to the RNA polymerase beta' chain family. The RNAP catalytic core consists of 2 alpha, 1 beta, 1 beta' and 1 omega subunit. When a sigma factor is associated with the core the holoenzyme is formed, which can initiate transcription. It depends on Mg(2+) as a cofactor. Zn(2+) serves as cofactor.

It catalyses the reaction RNA(n) + a ribonucleoside 5'-triphosphate = RNA(n+1) + diphosphate. Functionally, DNA-dependent RNA polymerase catalyzes the transcription of DNA into RNA using the four ribonucleoside triphosphates as substrates. The chain is DNA-directed RNA polymerase subunit beta' from Lactiplantibacillus plantarum (strain ATCC BAA-793 / NCIMB 8826 / WCFS1) (Lactobacillus plantarum).